Consider the following 271-residue polypeptide: Mannosyl-3-phosphoglycerate phosphatase (271 aa).

Asp13 (nucleophile) is an active-site residue. Positions 13, 15, and 214 each coordinate Mg(2+).

It belongs to the HAD-like hydrolase superfamily. MPGP family. The cofactor is Mg(2+).

It localises to the cytoplasm. The catalysed reaction is 2-O-(alpha-D-mannosyl)-3-phosphoglycerate + H2O = (2R)-2-O-(alpha-D-mannosyl)-glycerate + phosphate. The chain is Mannosyl-3-phosphoglycerate phosphatase from Escherichia coli (strain 55989 / EAEC).